The following is a 290-amino-acid chain: Small ribosomal subunit protein uS2 (290 aa).

Residues 269–290 (WEAEASGDWAAESAQPNPETKW) are disordered.

The protein belongs to the universal ribosomal protein uS2 family. In terms of assembly, component of the small ribosomal subunit. Mature ribosomes consist of a small (40S) and a large (60S) subunit. The 40S subunit contains about 33 different proteins and 1 molecule of RNA (18S). The 60S subunit contains about 49 different proteins and 3 molecules of RNA (25S, 5.8S and 5S). Interacts with rps21.

It localises to the cytoplasm. Its function is as follows. Required for the assembly and/or stability of the 40S ribosomal subunit. Required for the processing of the 20S rRNA-precursor to mature 18S rRNA in a late step of the maturation of 40S ribosomal subunits. The polypeptide is Small ribosomal subunit protein uS2 (rps0) (Talaromyces marneffei (strain ATCC 18224 / CBS 334.59 / QM 7333) (Penicillium marneffei)).